Consider the following 234-residue polypeptide: Phosphoribosylaminoimidazole-succinocarboxamide synthase (234 aa).

Belongs to the SAICAR synthetase family.

The enzyme catalyses 5-amino-1-(5-phospho-D-ribosyl)imidazole-4-carboxylate + L-aspartate + ATP = (2S)-2-[5-amino-1-(5-phospho-beta-D-ribosyl)imidazole-4-carboxamido]succinate + ADP + phosphate + 2 H(+). Its pathway is purine metabolism; IMP biosynthesis via de novo pathway; 5-amino-1-(5-phospho-D-ribosyl)imidazole-4-carboxamide from 5-amino-1-(5-phospho-D-ribosyl)imidazole-4-carboxylate: step 1/2. This is Phosphoribosylaminoimidazole-succinocarboxamide synthase from Staphylococcus aureus (strain MRSA252).